A 248-amino-acid polypeptide reads, in one-letter code: Probable transcriptional regulatory protein Smed_2641 (248 aa).

It belongs to the TACO1 family.

The protein localises to the cytoplasm. The chain is Probable transcriptional regulatory protein Smed_2641 from Sinorhizobium medicae (strain WSM419) (Ensifer medicae).